Consider the following 286-residue polypeptide: Shikimate dehydrogenase (NADP(+)) (286 aa).

Shikimate contacts are provided by residues 19–21 and Thr-66; that span reads SLS. Lys-70 acts as the Proton acceptor in catalysis. Residues Asn-91 and Asp-107 each coordinate shikimate. NADP(+) contacts are provided by residues 129-133 and Leu-229; that span reads GSGGA. A shikimate-binding site is contributed by Tyr-231. Gly-252 is an NADP(+) binding site.

Belongs to the shikimate dehydrogenase family. In terms of assembly, homodimer.

The catalysed reaction is shikimate + NADP(+) = 3-dehydroshikimate + NADPH + H(+). Its pathway is metabolic intermediate biosynthesis; chorismate biosynthesis; chorismate from D-erythrose 4-phosphate and phosphoenolpyruvate: step 4/7. Functionally, involved in the biosynthesis of the chorismate, which leads to the biosynthesis of aromatic amino acids. Catalyzes the reversible NADPH linked reduction of 3-dehydroshikimate (DHSA) to yield shikimate (SA). The protein is Shikimate dehydrogenase (NADP(+)) of Prochlorococcus marinus (strain AS9601).